The sequence spans 407 residues: Peptidase T (407 aa).

A Zn(2+)-binding site is contributed by histidine 77. The active site involves aspartate 79. Aspartate 138 lines the Zn(2+) pocket. The Proton acceptor role is filled by glutamate 172. Residues glutamate 173, aspartate 195, and histidine 377 each coordinate Zn(2+).

The protein belongs to the peptidase M20B family. Zn(2+) is required as a cofactor.

The protein localises to the cytoplasm. It carries out the reaction Release of the N-terminal residue from a tripeptide.. Its function is as follows. Cleaves the N-terminal amino acid of tripeptides. The polypeptide is Peptidase T (Aeromonas hydrophila subsp. hydrophila (strain ATCC 7966 / DSM 30187 / BCRC 13018 / CCUG 14551 / JCM 1027 / KCTC 2358 / NCIMB 9240 / NCTC 8049)).